The sequence spans 194 residues: Outer-membrane lipoprotein LolB (194 aa).

The N-terminal stretch at 1-18 (MTLFLRIFTFGCLLLLAG) is a signal peptide. Cys-19 is lipidated: N-palmitoyl cysteine. Cys-19 carries S-diacylglycerol cysteine lipidation.

The protein belongs to the LolB family. In terms of assembly, monomer.

The protein resides in the cell outer membrane. Plays a critical role in the incorporation of lipoproteins in the outer membrane after they are released by the LolA protein. This is Outer-membrane lipoprotein LolB from Aeromonas salmonicida (strain A449).